Here is a 263-residue protein sequence, read N- to C-terminus: Trans-aconitate 2-methyltransferase (263 aa).

This sequence belongs to the methyltransferase superfamily. Tam family.

Its subcellular location is the cytoplasm. The catalysed reaction is trans-aconitate + S-adenosyl-L-methionine = (E)-3-(methoxycarbonyl)pent-2-enedioate + S-adenosyl-L-homocysteine. In terms of biological role, catalyzes the S-adenosylmethionine monomethyl esterification of trans-aconitate. In Mycobacterium ulcerans (strain Agy99), this protein is Trans-aconitate 2-methyltransferase.